The sequence spans 856 residues: Subtilisin-like protease SBT2.2 (856 aa).

The signal sequence occupies residues 1–21; sequence MRRVLMVNFGVLLLFCFGVLS. Positions 22–159 are cleaved as a propeptide — activation peptide; the sequence is NSFGQDNGGD…IVLDFSVRTA (138 aa). Asn35 and Asn85 each carry an N-linked (GlcNAc...) asparagine glycan. Residues 40-159 enclose the Inhibitor I9 domain; sequence VYIVTLRQAS…IVLDFSVRTA (120 aa). The Peptidase S8 domain maps to 164–709; it reads PQFMGLPKGA…NGFVNATAAL (546 aa). Catalysis depends on Asp193, which acts as the Charge relay system. Asn204 and Asn255 each carry an N-linked (GlcNAc...) asparagine glycan. His269 acts as the Charge relay system in catalysis. N-linked (GlcNAc...) asparagine glycans are attached at residues Asn412, Asn441, Asn495, Asn540, and Asn568. In terms of domain architecture, PA spans 432–528; that stretch reads MISALDALKN…MDMPGIIIPS (97 aa). Ser634 (charge relay system) is an active-site residue. Asn704, Asn730, Asn738, Asn748, Asn767, Asn782, and Asn823 each carry an N-linked (GlcNAc...) asparagine glycan.

This sequence belongs to the peptidase S8 family.

It localises to the secreted. The sequence is that of Subtilisin-like protease SBT2.2 from Arabidopsis thaliana (Mouse-ear cress).